The primary structure comprises 231 residues: tRNA (guanine-N(7)-)-methyltransferase (231 aa).

Residues D57, E82, D109, and D132 each coordinate S-adenosyl-L-methionine. The active site involves D132. Substrate contacts are provided by residues K136, D168, and 205–208; that span reads TKFE. Positions 194 to 214 are disordered; the sequence is AFVPPPPPRPQTKFERRGLRK.

Belongs to the class I-like SAM-binding methyltransferase superfamily. TrmB family.

The enzyme catalyses guanosine(46) in tRNA + S-adenosyl-L-methionine = N(7)-methylguanosine(46) in tRNA + S-adenosyl-L-homocysteine. Its pathway is tRNA modification; N(7)-methylguanine-tRNA biosynthesis. Catalyzes the formation of N(7)-methylguanine at position 46 (m7G46) in tRNA. The protein is tRNA (guanine-N(7)-)-methyltransferase of Halorhodospira halophila (strain DSM 244 / SL1) (Ectothiorhodospira halophila (strain DSM 244 / SL1)).